Consider the following 621-residue polypeptide: 1-deoxy-D-xylulose-5-phosphate synthase (621 aa).

Residues H80 and 121 to 123 (GHS) each bind thiamine diphosphate. D152 contacts Mg(2+). Thiamine diphosphate is bound by residues 153–154 (GA), N181, Y288, and E371. A Mg(2+)-binding site is contributed by N181.

The protein belongs to the transketolase family. DXPS subfamily. In terms of assembly, homodimer. Mg(2+) serves as cofactor. Requires thiamine diphosphate as cofactor.

It carries out the reaction D-glyceraldehyde 3-phosphate + pyruvate + H(+) = 1-deoxy-D-xylulose 5-phosphate + CO2. It functions in the pathway metabolic intermediate biosynthesis; 1-deoxy-D-xylulose 5-phosphate biosynthesis; 1-deoxy-D-xylulose 5-phosphate from D-glyceraldehyde 3-phosphate and pyruvate: step 1/1. Catalyzes the acyloin condensation reaction between C atoms 2 and 3 of pyruvate and glyceraldehyde 3-phosphate to yield 1-deoxy-D-xylulose-5-phosphate (DXP). In Pectobacterium atrosepticum (strain SCRI 1043 / ATCC BAA-672) (Erwinia carotovora subsp. atroseptica), this protein is 1-deoxy-D-xylulose-5-phosphate synthase.